The sequence spans 315 residues: Putative methyltransferase NSUN5C (315 aa).

S-adenosyl-L-methionine contacts are provided by residues 50 to 56 (VPPQAIK), Asp-74, Arg-79, and Asp-121. The active-site Nucleophile is Cys-175. The tract at residues 245–269 (TSASQAKASAPERTPSPAPKRKKRA) is disordered.

The protein belongs to the class I-like SAM-binding methyltransferase superfamily. RsmB/NOP family. In terms of tissue distribution, ubiquitous.

Functionally, may have S-adenosyl-L-methionine-dependent methyl-transferase activity. In Homo sapiens (Human), this protein is Putative methyltransferase NSUN5C (NSUN5P2).